A 150-amino-acid chain; its full sequence is Ribonuclease H (150 aa).

Residues 1–146 (MPELFAYTDG…ADELARAGMA (146 aa)) enclose the RNase H type-1 domain. Mg(2+)-binding residues include D9, E52, D74, and D138.

This sequence belongs to the RNase H family. As to quaternary structure, monomer. Mg(2+) serves as cofactor.

The protein resides in the cytoplasm. It catalyses the reaction Endonucleolytic cleavage to 5'-phosphomonoester.. Its function is as follows. Endonuclease that specifically degrades the RNA of RNA-DNA hybrids. The sequence is that of Ribonuclease H from Roseobacter denitrificans (strain ATCC 33942 / OCh 114) (Erythrobacter sp. (strain OCh 114)).